We begin with the raw amino-acid sequence, 475 residues long: ISWI one complex protein 4 (475 aa).

Serine 2 is subject to Phosphoserine. Phosphothreonine is present on threonine 9. Disordered regions lie at residues 42-84, 181-296, and 454-475; these read VSVH…DFGE, EEEY…IKYH, and EMDR…KVGA. Phosphoserine is present on residues serine 65 and serine 73. 3 stretches are compositionally biased toward acidic residues: residues 72–84, 181–193, and 241–252; these read QSEE…DFGE, EEEY…EENE, and ASEEEEEEEEEK. Position 242 is a phosphoserine (serine 242). Residues 259–294 show a composition bias toward basic residues; it reads KRPQRTKTKKVVVSKTKPNPKTKAKKEKPKPPKPIK. Over residues 456-475 the composition is skewed to basic and acidic residues; the sequence is DREKPSFSEDVKEEESKVGA.

In terms of assembly, component of the ISW1B complex, which at least consists of ISW1, IOC2 and IOC4.

It is found in the nucleus. Its function is as follows. Functions as a component of the ISW1B complex, which acts in remodeling the chromatin by catalyzing an ATP-dependent alteration in the structure of nucleosomal DNA. The ISW1B complex acts within coding regions to control the amount of RNA polymerase II released into productive elongation and to coordinate elongation with termination and pre-mRNA processing. This is ISWI one complex protein 4 (IOC4) from Saccharomyces cerevisiae (strain ATCC 204508 / S288c) (Baker's yeast).